A 257-amino-acid polypeptide reads, in one-letter code: UPF0246 protein Sbal223_3241 (257 aa).

Belongs to the UPF0246 family.

The chain is UPF0246 protein Sbal223_3241 from Shewanella baltica (strain OS223).